We begin with the raw amino-acid sequence, 267 residues long: NAD kinase 1 (267 aa).

The Proton acceptor role is filled by Asp45. Residues 45–46, 122–123, Arg149, Asp151, and Ala186 contribute to the NAD(+) site; these read DG and NE.

The protein belongs to the NAD kinase family. Requires a divalent metal cation as cofactor.

It localises to the cytoplasm. The catalysed reaction is NAD(+) + ATP = ADP + NADP(+) + H(+). In terms of biological role, involved in the regulation of the intracellular balance of NAD and NADP, and is a key enzyme in the biosynthesis of NADP. Catalyzes specifically the phosphorylation on 2'-hydroxyl of the adenosine moiety of NAD to yield NADP. The sequence is that of NAD kinase 1 from Oceanobacillus iheyensis (strain DSM 14371 / CIP 107618 / JCM 11309 / KCTC 3954 / HTE831).